We begin with the raw amino-acid sequence, 119 residues long: Large ribosomal subunit protein uL22c (119 aa).

Belongs to the universal ribosomal protein uL22 family. As to quaternary structure, part of the 50S ribosomal subunit.

The protein localises to the plastid. It localises to the chloroplast. In terms of biological role, this protein binds specifically to 23S rRNA. The globular domain of the protein is located near the polypeptide exit tunnel on the outside of the subunit, while an extended beta-hairpin is found that lines the wall of the exit tunnel in the center of the 70S ribosome. In Chaetosphaeridium globosum (Charophycean green alga), this protein is Large ribosomal subunit protein uL22c (rpl22).